A 556-amino-acid chain; its full sequence is Arginine--tRNA ligase (556 aa).

Positions 133–143 match the 'HIGH' region motif; sequence ANPTGPIHIGH.

Belongs to the class-I aminoacyl-tRNA synthetase family. In terms of assembly, monomer.

It is found in the cytoplasm. The catalysed reaction is tRNA(Arg) + L-arginine + ATP = L-arginyl-tRNA(Arg) + AMP + diphosphate. The chain is Arginine--tRNA ligase from Dehalococcoides mccartyi (strain ATCC BAA-2100 / JCM 16839 / KCTC 5957 / BAV1).